Here is a 396-residue protein sequence, read N- to C-terminus: MAAAADTFLFTSESVNEGHPDKLCDQISDAVLDACLAQDAESKVACETCTKTNLVMVFGEITTKANVDYEKIVADTCREIGFVSPDVGLDADNCKVLVYIEQQSPDIAQGVHGHLTKRPEDIGAGDQGHMFGYATDETPELMPLSHVLATKLGARLTEVRKNGTCAWLRPDGKTQVTVEYYNENGAMVPIRVHTVLISTQHDETVTNDEIAADLKEHVIKPVIPEKYLDENTIFHLNPSGRFVIGGPHGDAGLTGRKIIIDTYGGWGAHGGGAFSRKDPTKVDRSGAYIARQAAKSIVASGLARRCIVQISYAIGVPEPLSVFVDTYGTGKIHDREILKIVKENFDFRPGMIAIALDLKKGGNRYLKTAAYGHFGREDPDFTWEAAKTLKWEKPQA.

Glu13 is a binding site for Mg(2+). Residue His19 coordinates ATP. Glu47 serves as a coordination point for K(+). L-methionine is bound by residues Glu60 and Gln103. Residues 171 to 173, 239 to 242, Asp250, 256 to 257, Ala273, Lys277, and Lys281 each bind ATP; these read DGK, SGRF, and RK. Asp250 is an L-methionine binding site. Position 281 (Lys281) interacts with L-methionine.

It belongs to the AdoMet synthase family. In terms of assembly, homotetramer. The cofactor is Mn(2+). Mg(2+) is required as a cofactor. Requires Co(2+) as cofactor. It depends on K(+) as a cofactor.

The protein resides in the cytoplasm. The catalysed reaction is L-methionine + ATP + H2O = S-adenosyl-L-methionine + phosphate + diphosphate. Its pathway is amino-acid biosynthesis; S-adenosyl-L-methionine biosynthesis; S-adenosyl-L-methionine from L-methionine: step 1/1. In terms of biological role, catalyzes the formation of S-adenosylmethionine from methionine and ATP. The reaction comprises two steps that are both catalyzed by the same enzyme: formation of S-adenosylmethionine (AdoMet) and triphosphate, and subsequent hydrolysis of the triphosphate. The chain is S-adenosylmethionine synthase 2 (SAM2) from Dianthus caryophyllus (Carnation).